Here is a 467-residue protein sequence, read N- to C-terminus: Histone acetyltransferase type B catalytic subunit (467 aa).

The segment at 1-24 (MVQKQQASAGPGTEPKKRRRVGFS) is disordered. Residues 249–251 (ILV) and 256–262 (QGKGLGS) each bind acetyl-CoA. The active-site Proton donor/acceptor is E283.

Belongs to the HAT1 family.

Its subcellular location is the nucleus. It is found in the cytoplasm. The catalysed reaction is L-lysyl-[protein] + acetyl-CoA = N(6)-acetyl-L-lysyl-[protein] + CoA + H(+). In terms of biological role, acetylates soluble but not nucleosomal H4. Acetylates 'Lys-12' of histone H4. The chain is Histone acetyltransferase type B catalytic subunit (HAG2) from Arabidopsis thaliana (Mouse-ear cress).